A 314-amino-acid polypeptide reads, in one-letter code: DNA-directed RNA polymerase subunit alpha (314 aa).

The tract at residues 1–228 (MIEIEKPKIE…EHLNIFVGLT (228 aa)) is alpha N-terminal domain (alpha-NTD). An alpha C-terminal domain (alpha-CTD) region spans residues 246–314 (EKVLEMTIEE…ELGLGLRKDD (69 aa)).

It belongs to the RNA polymerase alpha chain family. In terms of assembly, homodimer. The RNAP catalytic core consists of 2 alpha, 1 beta, 1 beta' and 1 omega subunit. When a sigma factor is associated with the core the holoenzyme is formed, which can initiate transcription.

The catalysed reaction is RNA(n) + a ribonucleoside 5'-triphosphate = RNA(n+1) + diphosphate. Functionally, DNA-dependent RNA polymerase catalyzes the transcription of DNA into RNA using the four ribonucleoside triphosphates as substrates. The protein is DNA-directed RNA polymerase subunit alpha of Bacillus pumilus (strain SAFR-032).